The sequence spans 168 residues: Transcription antitermination protein NusB (168 aa).

It belongs to the NusB family.

Involved in transcription antitermination. Required for transcription of ribosomal RNA (rRNA) genes. Binds specifically to the boxA antiterminator sequence of the ribosomal RNA (rrn) operons. The chain is Transcription antitermination protein NusB from Chlamydia trachomatis serovar L2 (strain ATCC VR-902B / DSM 19102 / 434/Bu).